A 483-amino-acid polypeptide reads, in one-letter code: Glycogen synthase (483 aa).

ADP-alpha-D-glucose is bound at residue lysine 15.

The protein belongs to the glycosyltransferase 1 family. Bacterial/plant glycogen synthase subfamily.

It catalyses the reaction [(1-&gt;4)-alpha-D-glucosyl](n) + ADP-alpha-D-glucose = [(1-&gt;4)-alpha-D-glucosyl](n+1) + ADP + H(+). It functions in the pathway glycan biosynthesis; glycogen biosynthesis. Functionally, synthesizes alpha-1,4-glucan chains using ADP-glucose. The sequence is that of Glycogen synthase from Alkalilimnicola ehrlichii (strain ATCC BAA-1101 / DSM 17681 / MLHE-1).